We begin with the raw amino-acid sequence, 367 residues long: Chorismate synthase (367 aa).

The segment at 41 to 60 (FTHDLQRRASGKSRHTSARR) is disordered. Residues R48 and R54 each contribute to the NADP(+) site. FMN contacts are provided by residues 125–127 (RSS), 238–239 (NA), G278, 293–297 (KPTSS), and R319.

The protein belongs to the chorismate synthase family. As to quaternary structure, homotetramer. Requires FMNH2 as cofactor.

It catalyses the reaction 5-O-(1-carboxyvinyl)-3-phosphoshikimate = chorismate + phosphate. It participates in metabolic intermediate biosynthesis; chorismate biosynthesis; chorismate from D-erythrose 4-phosphate and phosphoenolpyruvate: step 7/7. Catalyzes the anti-1,4-elimination of the C-3 phosphate and the C-6 proR hydrogen from 5-enolpyruvylshikimate-3-phosphate (EPSP) to yield chorismate, which is the branch point compound that serves as the starting substrate for the three terminal pathways of aromatic amino acid biosynthesis. This reaction introduces a second double bond into the aromatic ring system. The sequence is that of Chorismate synthase from Xanthomonas euvesicatoria pv. vesicatoria (strain 85-10) (Xanthomonas campestris pv. vesicatoria).